Consider the following 611-residue polypeptide: BTB/POZ domain-containing protein 9 (611 aa).

In terms of domain architecture, BTB spans 36–104; the sequence is GDVTFVVEKK…IYTGRATLTD (69 aa). Positions 142–240 constitute a BACK domain; the sequence is VCMTFDVASL…SLTELLNVVR (99 aa). The interval 560–611 is disordered; that stretch reads QSAQKDSSDEPGTGGASAAGQQLDPHALQAPSGSSLPSSPGSNSRSPNRQHQ. The segment covering 586 to 611 has biased composition (low complexity); it reads ALQAPSGSSLPSSPGSNSRSPNRQHQ.

In Bos taurus (Bovine), this protein is BTB/POZ domain-containing protein 9 (BTBD9).